We begin with the raw amino-acid sequence, 145 residues long: Maximins 3/H11 type 3 (145 aa).

A signal peptide spans 1 to 18 (MNFKYIVAVSFLIASAYA). Propeptides lie at residues 19–43 (RSVQ…LREI) and 75–122 (TAEE…TKKE). I144 carries the isoleucine amide modification.

The protein belongs to the bombinin family. As to expression, expressed by the skin glands.

The protein resides in the secreted. In terms of biological role, maximin-3 shows antibacterial activity against both Gram-positive and Gram-negative bacteria. It also shows antimicrobial activity against the fungus C.albicans, but not against A.flavus nor P.uticale. It has little hemolytic activity. It possess a significant cytotoxicity against tumor cell lines. It possess a significant anti-HIV activity. It shows high spermicidal activity. Functionally, maximin-H11 shows antimicrobial activity against bacteria and against the fungus C.albicans. Shows strong hemolytic activity. The polypeptide is Maximins 3/H11 type 3 (Bombina maxima (Giant fire-bellied toad)).